Here is a 262-residue protein sequence, read N- to C-terminus: Shikimate dehydrogenase (NADP(+)) (262 aa).

Shikimate contacts are provided by residues 15-17 and T62; that span reads SRS. The Proton acceptor role is filled by K66. E78 lines the NADP(+) pocket. Shikimate contacts are provided by N87 and D102. Residues 126-130, 150-155, and M214 contribute to the NADP(+) site; these read GAGGA and NRTLAR. Shikimate is bound at residue Y216. Residue G236 participates in NADP(+) binding.

It belongs to the shikimate dehydrogenase family. In terms of assembly, homodimer.

It carries out the reaction shikimate + NADP(+) = 3-dehydroshikimate + NADPH + H(+). It functions in the pathway metabolic intermediate biosynthesis; chorismate biosynthesis; chorismate from D-erythrose 4-phosphate and phosphoenolpyruvate: step 4/7. Functionally, involved in the biosynthesis of the chorismate, which leads to the biosynthesis of aromatic amino acids. Catalyzes the reversible NADPH linked reduction of 3-dehydroshikimate (DHSA) to yield shikimate (SA). The polypeptide is Shikimate dehydrogenase (NADP(+)) (Acinetobacter baumannii (strain SDF)).